The primary structure comprises 795 residues: Phospholipase A-2-activating protein (795 aa).

WD repeat units lie at residues 17–56 (HELDVRGLVCCAYPPGAFVSVSRDRTTRLWAPDSPNRSFT), 63–107 (GHSN…PLYI), 110–148 (GHKNTVCSLSSGKFGTLLSGSWDTTAKVWLNDKCMMTLQ), 149–188 (GHTAAVWAVKILPEQGLMLTGSADKTVKLWKAGRCERTFS), 190–227 (HEDCVRGLAILSETEFLSCANDASIRRWQITGECLEVY), 229–268 (GHTNYIYSISVFPNCRDFVTTAEDRSLRIWKHGECAQTIR), and 270–307 (PAQSIWCCCVLDNGDIVVGASDGIIRVFTESEDRTASA). Position 50 is a phosphoserine (S50). One can recognise a PFU domain in the interval 366–465 (QWSVSEGRWI…KGQMLGLGNP (100 aa)). An N6-acetyllysine modification is found at K529. One can recognise a PUL domain in the interval 533–794 (IYFPKKEAVT…SECCRFILNL (262 aa)). ARM repeat units follow at residues 546–588 (ANPT…NSSS), 589–620 (EKPTVQQLQILWKAINCPEDIVFPALDILRLS), 621–669 (IKHP…CFVG), 670–715 (QAGQ…CFHK), 716–755 (DHNIEGKAQCLSLISTILEVVQDLEATFRLLVALGTLISD), and 756–795 (DSNAVQLAKSLGVDSQIKKYSSVSEPAKVSECCRFILNLL).

The protein belongs to the WD repeat PLAP family. Interacts with ubiquitin. Interacts with UBXN6, VCP and YOD1; may form a complex involved in macroautophagy.

The protein localises to the nucleus. It localises to the cytoplasm. The protein resides in the synapse. Plays a role in protein ubiquitination, sorting and degradation through its association with VCP. Involved in ubiquitin-mediated membrane proteins trafficking to late endosomes in an ESCRT-dependent manner, and hence plays a role in synaptic vesicle recycling. May play a role in macroautophagy, regulating for instance the clearance of damaged lysosomes. Plays a role in cerebellar Purkinje cell development. Positively regulates cytosolic and calcium-independent phospholipase A2 activities in a tumor necrosis factor alpha (TNF-alpha)- or lipopolysaccharide (LPS)-dependent manner, and hence prostaglandin E2 biosynthesis. In Homo sapiens (Human), this protein is Phospholipase A-2-activating protein (PLAA).